The primary structure comprises 144 residues: uncharacterized protein (144 aa).

Positions 2 to 144 (IELDAINPNN…EDSVLLSKKL (143 aa)) constitute an N-acetyltransferase domain.

It belongs to the acetyltransferase family.

It is found in the cytoplasm. The protein resides in the nucleus. This is an uncharacterized protein from Schizosaccharomyces pombe (strain 972 / ATCC 24843) (Fission yeast).